A 358-amino-acid polypeptide reads, in one-letter code: UDP-N-acetylglucosamine--N-acetylmuramyl-(pentapeptide) pyrophosphoryl-undecaprenol N-acetylglucosamine transferase (358 aa).

UDP-N-acetyl-alpha-D-glucosamine-binding positions include 13–15, Asn125, Arg162, Ser190, Ile244, 263–268, and Gln289; these read TGG and ALTVAE.

The protein belongs to the glycosyltransferase 28 family. MurG subfamily.

The protein resides in the cell inner membrane. It carries out the reaction di-trans,octa-cis-undecaprenyl diphospho-N-acetyl-alpha-D-muramoyl-L-alanyl-D-glutamyl-meso-2,6-diaminopimeloyl-D-alanyl-D-alanine + UDP-N-acetyl-alpha-D-glucosamine = di-trans,octa-cis-undecaprenyl diphospho-[N-acetyl-alpha-D-glucosaminyl-(1-&gt;4)]-N-acetyl-alpha-D-muramoyl-L-alanyl-D-glutamyl-meso-2,6-diaminopimeloyl-D-alanyl-D-alanine + UDP + H(+). It functions in the pathway cell wall biogenesis; peptidoglycan biosynthesis. Its function is as follows. Cell wall formation. Catalyzes the transfer of a GlcNAc subunit on undecaprenyl-pyrophosphoryl-MurNAc-pentapeptide (lipid intermediate I) to form undecaprenyl-pyrophosphoryl-MurNAc-(pentapeptide)GlcNAc (lipid intermediate II). This is UDP-N-acetylglucosamine--N-acetylmuramyl-(pentapeptide) pyrophosphoryl-undecaprenol N-acetylglucosamine transferase from Halorhodospira halophila (strain DSM 244 / SL1) (Ectothiorhodospira halophila (strain DSM 244 / SL1)).